We begin with the raw amino-acid sequence, 396 residues long: Probable circularly permuted 1,3-beta-glucanase YJL171C (396 aa).

The first 19 residues, 1–19 (MLQSIVLSVCMFMLHTVAA), serve as a signal peptide directing secretion. Asn-51, Asn-99, Asn-122, Asn-146, Asn-174, Asn-219, and Asn-249 each carry an N-linked (GlcNAc...) asparagine glycan. The short motif at 259–264 (EYDIFE) is the ExDxxE motif element. 4 N-linked (GlcNAc...) asparagine glycosylation sites follow: Asn-267, Asn-300, Asn-328, and Asn-346. The GPI-anchor amidated asparagine moiety is linked to residue Asn-368. The propeptide at 369–396 (GVALTKMQNGVWYYILAIFTAFTQVVLI) is removed in mature form.

This sequence belongs to the PGA52 family. Post-translationally, extensively N-glycosylated.

It is found in the cell membrane. The enzyme catalyses Hydrolysis of (1-&gt;3)-beta-D-glucosidic linkages in (1-&gt;3)-beta-D-glucans.. Its function is as follows. Probable circularly permuted 1,3-beta-glucanase involved in cell wall modification through beta-1,3-glucan network alterations such as increased branching or remodeling. This chain is Probable circularly permuted 1,3-beta-glucanase YJL171C (TOH1), found in Saccharomyces cerevisiae (strain ATCC 204508 / S288c) (Baker's yeast).